We begin with the raw amino-acid sequence, 95 residues long: Small ribosomal subunit protein uS17 (95 aa).

This sequence belongs to the universal ribosomal protein uS17 family. As to quaternary structure, part of the 30S ribosomal subunit.

One of the primary rRNA binding proteins, it binds specifically to the 5'-end of 16S ribosomal RNA. This Phytoplasma australiense protein is Small ribosomal subunit protein uS17.